Here is a 202-residue protein sequence, read N- to C-terminus: Ribosome maturation factor RimP (202 aa).

It belongs to the RimP family.

The protein resides in the cytoplasm. In terms of biological role, required for maturation of 30S ribosomal subunits. This is Ribosome maturation factor RimP from Paracidovorax citrulli (strain AAC00-1) (Acidovorax citrulli).